A 478-amino-acid polypeptide reads, in one-letter code: Siroheme synthase (478 aa).

The segment at 1-207 (MTANVLFPLF…QRHAEAEAVL (207 aa)) is precorrin-2 dehydrogenase /sirohydrochlorin ferrochelatase. NAD(+)-binding positions include 25–26 (KV) and 46–47 (PS). Serine 132 carries the post-translational modification Phosphoserine. Residues 220–478 (GSVTLVGAGA…PCPPRTHPIS (259 aa)) form a uroporphyrinogen-III C-methyltransferase region. Aspartate 252 (proton acceptor) is an active-site residue. Lysine 274 functions as the Proton donor in the catalytic mechanism. S-adenosyl-L-methionine-binding positions include 305–307 (GGD), valine 310, 335–336 (TA), methionine 387, and glycine 416.

In the N-terminal section; belongs to the precorrin-2 dehydrogenase / sirohydrochlorin ferrochelatase family. It in the C-terminal section; belongs to the precorrin methyltransferase family.

It carries out the reaction uroporphyrinogen III + 2 S-adenosyl-L-methionine = precorrin-2 + 2 S-adenosyl-L-homocysteine + H(+). The catalysed reaction is precorrin-2 + NAD(+) = sirohydrochlorin + NADH + 2 H(+). The enzyme catalyses siroheme + 2 H(+) = sirohydrochlorin + Fe(2+). It functions in the pathway cofactor biosynthesis; adenosylcobalamin biosynthesis; precorrin-2 from uroporphyrinogen III: step 1/1. Its pathway is cofactor biosynthesis; adenosylcobalamin biosynthesis; sirohydrochlorin from precorrin-2: step 1/1. It participates in porphyrin-containing compound metabolism; siroheme biosynthesis; precorrin-2 from uroporphyrinogen III: step 1/1. The protein operates within porphyrin-containing compound metabolism; siroheme biosynthesis; siroheme from sirohydrochlorin: step 1/1. It functions in the pathway porphyrin-containing compound metabolism; siroheme biosynthesis; sirohydrochlorin from precorrin-2: step 1/1. Its function is as follows. Multifunctional enzyme that catalyzes the SAM-dependent methylations of uroporphyrinogen III at position C-2 and C-7 to form precorrin-2 via precorrin-1. Then it catalyzes the NAD-dependent ring dehydrogenation of precorrin-2 to yield sirohydrochlorin. Finally, it catalyzes the ferrochelation of sirohydrochlorin to yield siroheme. This chain is Siroheme synthase, found in Xylella fastidiosa (strain M23).